Consider the following 467-residue polypeptide: Peptidoglycan-N-acetylmuramic acid deacetylase PdaC (467 aa).

The chain crosses the membrane as a helical span at residues 6-26 (IKWFHVLIAVVCVVGLIGFFH). The NodB homology domain occupies 278 to 452 (KVIALTFDDG…KLTDQGYQLV (175 aa)). D285 acts as the Proton acceptor in catalysis. A divalent metal cation-binding residues include D286, H336, and H340. H427 (proton donor) is an active-site residue.

The protein in the N-terminal section; belongs to the RsiV family. In the C-terminal section; belongs to the polysaccharide deacetylase family.

It is found in the cell membrane. Activated by divalent metal cations; Mn(2+) is the most efficient, followed by Ca(2+) and Mg(2+). In contrast to PgdA from S.pneumoniae, these ions are not absolutely required for deacetylase activity. Its function is as follows. Catalyzes the deacetylation of N-acetylmuramic acid (MurNAc) residues in peptidoglycan, a modification that confers resistance to lysosyme. Is not able to deacetylate N-acetylglucosamine (GlcNAc) residues in peptidoglycan, but can deacylate chitin oligomers such as GlcNAc4 and GlcNAc5. Is essentially not active toward chitosan (partially deacetylated GlcNAc polymer) and has very low activity toward chitin (GlcNAc polymer). Does not deacetylate GlcNAc. This Bacillus subtilis (strain 168) protein is Peptidoglycan-N-acetylmuramic acid deacetylase PdaC (pdaC).